Here is a 432-residue protein sequence, read N- to C-terminus: Ubiquitin-like modifier-activating enzyme 5 (432 aa).

The tract at residues 25–47 (ETKKNQTPSVLKGPTVSQERPSA) is disordered. Residues 29 to 44 (NQTPSVLKGPTVSQER) show a composition bias toward polar residues. 5 residues coordinate ATP: Gly-96, Asp-117, Lys-140, Asn-163, and Asn-196. Residues Cys-238 and Cys-241 each contribute to the Zn(2+) site. Catalysis depends on Cys-262, which acts as the Glycyl thioester intermediate. 2 residues coordinate Zn(2+): Cys-315 and Cys-320. Positions 363–406 (DTTEAPSSSAATEVAPGLKFAYEPTQTPKKNSSDNLKLSPSQAV) are disordered. A compositionally biased stretch (polar residues) spans 386–406 (PTQTPKKNSSDNLKLSPSQAV).

The protein belongs to the ubiquitin-activating E1 family. UBA5 subfamily. As to quaternary structure, interacts with ufc-1.

Functionally, E1-like enzyme which activates ufm-1. Required for interaction between ufm-1 and ufc-1. This Caenorhabditis briggsae protein is Ubiquitin-like modifier-activating enzyme 5.